A 261-amino-acid chain; its full sequence is Proliferating cell nuclear antigen (261 aa).

Residues K14, K77, and K80 each carry the N6-acetyllysine modification. A DNA-binding region spans residues 61 to 80 (RCDRNLAMGVNLTSMSKILK). Cysteines 135 and 162 form a disulfide. Residue K164 forms a Glycyl lysine isopeptide (Lys-Gly) (interchain with G-Cter in SUMO2); alternate linkage. K164 is covalently cross-linked (Glycyl lysine isopeptide (Lys-Gly) (interchain with G-Cter in ubiquitin); alternate). A Phosphotyrosine; by EGFR modification is found at Y211. Position 248 is an N6-acetyllysine (K248). Residue K254 forms a Glycyl lysine isopeptide (Lys-Gly) (interchain with G-Cter in SUMO2) linkage.

Belongs to the PCNA family. In terms of assembly, homotrimer. Interacts with p300/EP300; the interaction occurs on chromatin in UV-irradiated damaged cells. Interacts with CREBBP (via transactivation domain and C-terminus); the interaction occurs on chromatin in UV-irradiated damaged cells. Directly interacts with POLD1, POLD3 and POLD4 subunits of the DNA polymerase delta complex, POLD3 being the major interacting partner; the interaction with POLD3 is inhibited by CDKN1A/p21(CIP1). Forms a complex with activator 1 heteropentamer in the presence of ATP. Interacts with EXO1, POLH, POLK, DNMT1, ERCC5, FEN1, CDC6 and POLDIP2. Interacts with POLB. Interacts with APEX2; this interaction is triggered by reactive oxygen species and increased by misincorporation of uracil in nuclear DNA. Forms a ternary complex with DNTTIP2 and core histone. Interacts with KCTD10 and PPP1R15A. Interacts with SMARCA5/SNF2H. Interacts with BAZ1B/WSTF; the interaction is direct and is required for BAZ1B/WSTF binding to replication foci during S phase. Interacts with HLTF and SHPRH. Interacts with NUDT15; this interaction is disrupted in response to UV irradiation and acetylation. Interacts with CDKN1A/p21(CIP1) and CDT1; interacts via their PIP-box which also recruits the DCX(DTL) complex. The interaction with CDKN1A inhibits POLD3 binding. Interacts with DDX11. Interacts with EGFR; positively regulates PCNA. Interacts with PARPBP. Interacts (when ubiquitinated) with SPRTN; leading to enhance RAD18-mediated PCNA ubiquitination. Interacts (when polyubiquitinated) with ZRANB3. Interacts with SMARCAD1. Interacts with CDKN1C. Interacts with PCLAF (via PIP-box). Interacts with RTEL1 (via PIP-box); the interaction is direct and essential for the suppression of telomere fragility. Interacts with FAM111A (via PIP-box); the interaction is direct and required for PCNA loading on chromatin binding. Interacts with LIG1. Interacts with SETMAR. Interacts with ANKRD17. Interacts with FBXO18/FBH1 (via PIP-box); the interaction recruits the DCX(DTL) complex and promotes ubiquitination and degradation of FBXO18/FBH1. Interacts with POLN. Interacts with SDE2 (via PIP-box); the interaction is direct and prevents ultraviolet light induced monoubiquitination. Component of the replisome complex composed of at least DONSON, MCM2, MCM7, PCNA and TICRR; interaction at least with PCNA occurs during DNA replication. Interacts with MAPK15; the interaction is chromatin binding dependent and prevents MDM2-mediated PCNA destruction by inhibiting the association of PCNA with MDM2. Interacts with PARP10 (via PIP-box). Interacts with DDI2. Interacts with HMCES (via PIP-box). Interacts with TRAIP (via PIP-box). Interacts with UHRF2. Interacts with ALKBH2; this interaction is enhanced during the S-phase of the cell cycle. Interacts with ATAD5; the interaction promotes USP1-mediated PCNA deubiquitination. Interacts (when phosphorylated) with GRB2. Interacts with nuclear UNG; this interaction mediates UNG recruitment to S-phase replication foci. Interacts with ERCC6L2 (via an atypical PIP-box); this interaction facilitates cenrtomeric localization of ERCC6L2. Phosphorylated. Phosphorylation at Tyr-211 by EGFR stabilizes chromatin-associated PCNA. In terms of processing, acetylated by CREBBP and p300/EP300; preferentially acetylated by CREBBP on Lys-80, Lys-13 and Lys-14 and on Lys-77 by p300/EP300 upon loading on chromatin in response to UV irradiation. Lysine acetylation disrupts association with chromatin, hence promoting PCNA ubiquitination and proteasomal degradation in response to UV damage in a CREBBP- and EP300-dependent manner. Acetylation disrupts interaction with NUDT15 and promotes degradation. Post-translationally, ubiquitinated. Following DNA damage, can be either monoubiquitinated to stimulate direct bypass of DNA lesions by specialized DNA polymerases or polyubiquitinated to promote recombination-dependent DNA synthesis across DNA lesions by template switching mechanisms. Following induction of replication stress, monoubiquitinated by the UBE2B-RAD18 complex on Lys-164, leading to recruit translesion (TLS) polymerases, which are able to synthesize across DNA lesions in a potentially error-prone manner. An error-free pathway also exists and requires non-canonical polyubiquitination on Lys-164 through 'Lys-63' linkage of ubiquitin moieties by the E2 complex UBE2N-UBE2V2 and the E3 ligases, HLTF, RNF8 and SHPRH. This error-free pathway, also known as template switching, employs recombination mechanisms to synthesize across the lesion, using as a template the undamaged, newly synthesized strand of the sister chromatid. Monoubiquitination at Lys-164 also takes place in undamaged proliferating cells, and is mediated by the DCX(DTL) complex, leading to enhance PCNA-dependent translesion DNA synthesis. Sumoylated during S phase. Methylated on glutamate residues by ARMT1.

The protein localises to the nucleus. In terms of biological role, auxiliary protein of DNA polymerase delta and epsilon, is involved in the control of eukaryotic DNA replication by increasing the polymerase's processibility during elongation of the leading strand. Induces a robust stimulatory effect on the 3'-5' exonuclease and 3'-phosphodiesterase, but not apurinic-apyrimidinic (AP) endonuclease, APEX2 activities. Has to be loaded onto DNA in order to be able to stimulate APEX2. Plays a key role in DNA damage response (DDR) by being conveniently positioned at the replication fork to coordinate DNA replication with DNA repair and DNA damage tolerance pathways. Acts as a loading platform to recruit DDR proteins that allow completion of DNA replication after DNA damage and promote postreplication repair: Monoubiquitinated PCNA leads to recruitment of translesion (TLS) polymerases, while 'Lys-63'-linked polyubiquitination of PCNA is involved in error-free pathway and employs recombination mechanisms to synthesize across the lesion. The polypeptide is Proliferating cell nuclear antigen (PCNA) (Bos taurus (Bovine)).